The following is a 2537-amino-acid chain: Centrosomal protein of 192 kDa (2537 aa).

Disordered regions lie at residues 69 to 138 (FSVP…ATES) and 288 to 308 (HSSETTHKESEESQVICLPGT). The segment covering 70-81 (SVPSGSSPGSQS) has biased composition (low complexity). A compositionally biased stretch (polar residues) spans 106–122 (VESQRLSNALSKQSALQ). Residues 288-298 (HSSETTHKESE) show a composition bias toward basic and acidic residues. Ser812 is modified (phosphoserine). 4 disordered regions span residues 950–1021 (VTFE…QQQP), 1043–1064 (VSEPESSYPTTATDDALEDRKS), 1101–1158 (KGTL…WTSN), and 1182–1234 (ATSH…STVH). The segment covering 960 to 970 (PKNSDLKNTSP) has biased composition (polar residues). A compositionally biased stretch (low complexity) spans 984-1005 (FRPSTSPLSHSSPSEISGTSSS). Composition is skewed to polar residues over residues 1046–1055 (PESSYPTTAT) and 1103–1112 (TLSSIIQNNS). A compositionally biased stretch (basic and acidic residues) spans 1128–1141 (EYVKPDFRWSKDPS). Residues 1142 to 1158 (SKSGNLLETSEVGWTSN) show a composition bias toward polar residues. A compositionally biased stretch (basic and acidic residues) spans 1195–1207 (EDQRISPKDKSTA). A compositionally biased stretch (polar residues) spans 1213–1234 (GQVSHQTTSENQCTPIPSSTVH). Phosphoserine occurs at positions 1755, 2098, and 2110. A Hydroxyproline modification is found at Pro2313.

Interacts with SHBG. Interacts with PLK4; this interaction mediates the formation of a ternary complex composed by PLK4, TENT5C and CEP192. Interacts with CCDC66. Post-translationally, hydroxylation by PHD1/EGLN2 at Pro-2313 promotes ubiquitination. Ubiquitinated by a SCF(SKP2) complex following proline hydroxylation. In terms of processing, ubiquitinated in a FBXL13-dependent manner, leading to proteasomal degradation.

It is found in the cytoplasm. Its subcellular location is the cytoskeleton. It localises to the microtubule organizing center. The protein resides in the centrosome. The protein localises to the centriole. Functionally, required for mitotic centrosome maturation and bipolar spindle assembly. Appears to be a major regulator of pericentriolar material (PCM) recruitment, centrosome maturation, and centriole duplication. Centrosome-specific activating scaffold for AURKA and PLK1. The polypeptide is Centrosomal protein of 192 kDa (Homo sapiens (Human)).